The primary structure comprises 178 residues: Cytochrome b6-f complex iron-sulfur subunit (178 aa).

A helical transmembrane segment spans residues 20–42; it reads LLTFGSVTGVALGALYPVVNYFI. One can recognise a Rieske domain in the interval 65-161; the sequence is ASGWLADHKE…VNVENDNVFV (97 aa). Positions 107, 109, 125, and 128 each coordinate [2Fe-2S] cluster. A disulfide bond links Cys112 and Cys127.

It belongs to the Rieske iron-sulfur protein family. In terms of assembly, the 4 large subunits of the cytochrome b6-f complex are cytochrome b6, subunit IV (17 kDa polypeptide, PetD), cytochrome f and the Rieske protein, while the 4 small subunits are PetG, PetL, PetM and PetN. The complex functions as a dimer. [2Fe-2S] cluster serves as cofactor.

It is found in the cellular thylakoid membrane. The catalysed reaction is 2 oxidized [plastocyanin] + a plastoquinol + 2 H(+)(in) = 2 reduced [plastocyanin] + a plastoquinone + 4 H(+)(out). Its function is as follows. Component of the cytochrome b6-f complex, which mediates electron transfer between photosystem II (PSII) and photosystem I (PSI), cyclic electron flow around PSI, and state transitions. In Synechococcus sp. (strain RCC307), this protein is Cytochrome b6-f complex iron-sulfur subunit.